Here is a 281-residue protein sequence, read N- to C-terminus: Succinate dehydrogenase [ubiquinone] iron-sulfur subunit 1, mitochondrial (281 aa).

Residues 1–25 (MAAAALLRRSPAARALLSPALSSRL) constitute a mitochondrion transit peptide. Residues 26–48 (VASKPHSSSPAPPPPPSKAGANT) form a disordered region. In terms of domain architecture, 2Fe-2S ferredoxin-type spans 49–141 (KTFSIYRWDP…ASTISPLPHM (93 aa)). [2Fe-2S] cluster contacts are provided by C102, C107, and C122. Residues 184-214 (DRAKLDGMYECILCACCSTSCPSYWWNPEEY) enclose the 4Fe-4S ferredoxin-type domain. [4Fe-4S] cluster-binding residues include C194, C197, and C200. [3Fe-4S] cluster is bound at residue C204. A ubiquinone is bound at residue W209. The [3Fe-4S] cluster site is built by C251 and C257. C261 lines the [4Fe-4S] cluster pocket.

Belongs to the succinate dehydrogenase/fumarate reductase iron-sulfur protein family. As to quaternary structure, component of complex II composed of eight subunits in plants: four classical SDH subunits SDH1, SDH2, SDH3 and SDH4 (a flavoprotein (FP), an iron-sulfur protein (IP), and a cytochrome b composed of a large and a small subunit.), as well as four subunits unknown in mitochondria from bacteria and heterotrophic eukaryotes. Requires [2Fe-2S] cluster as cofactor. It depends on [3Fe-4S] cluster as a cofactor. [4Fe-4S] cluster is required as a cofactor.

The protein localises to the mitochondrion inner membrane. It carries out the reaction a quinone + succinate = fumarate + a quinol. Its pathway is carbohydrate metabolism; tricarboxylic acid cycle; fumarate from succinate (eukaryal route): step 1/1. Functionally, iron-sulfur protein (IP) subunit of succinate dehydrogenase (SDH) that is involved in complex II of the mitochondrial electron transport chain and is responsible for transferring electrons from succinate to ubiquinone (coenzyme Q). The polypeptide is Succinate dehydrogenase [ubiquinone] iron-sulfur subunit 1, mitochondrial (Oryza sativa subsp. japonica (Rice)).